A 357-amino-acid chain; its full sequence is Isopentenyl-diphosphate delta-isomerase (357 aa).

Residue 12–13 coordinates substrate; that stretch reads RK. FMN contacts are provided by residues serine 70, 71-73, serine 101, and asparagine 130; that span reads SMT. 101 to 103 serves as a coordination point for substrate; sequence SMR. Residue glutamine 165 participates in substrate binding. Glutamate 166 serves as a coordination point for Mg(2+). FMN is bound by residues lysine 197 and 310–311; that span reads AR.

This sequence belongs to the IPP isomerase type 2 family. Homooctamer. Dimer of tetramers. FMN is required as a cofactor. Requires NADPH as cofactor. The cofactor is Mg(2+).

The protein resides in the cytoplasm. It catalyses the reaction isopentenyl diphosphate = dimethylallyl diphosphate. In terms of biological role, involved in the biosynthesis of isoprenoids. Catalyzes the 1,3-allylic rearrangement of the homoallylic substrate isopentenyl (IPP) to its allylic isomer, dimethylallyl diphosphate (DMAPP). The protein is Isopentenyl-diphosphate delta-isomerase of Pelodictyon phaeoclathratiforme (strain DSM 5477 / BU-1).